We begin with the raw amino-acid sequence, 427 residues long: Glutamate-1-semialdehyde 2,1-aminomutase 2 (427 aa).

At K267 the chain carries N6-(pyridoxal phosphate)lysine.

The protein belongs to the class-III pyridoxal-phosphate-dependent aminotransferase family. HemL subfamily. Homodimer. Requires pyridoxal 5'-phosphate as cofactor.

It is found in the cytoplasm. The catalysed reaction is (S)-4-amino-5-oxopentanoate = 5-aminolevulinate. Its pathway is porphyrin-containing compound metabolism; protoporphyrin-IX biosynthesis; 5-aminolevulinate from L-glutamyl-tRNA(Glu): step 2/2. This is Glutamate-1-semialdehyde 2,1-aminomutase 2 from Staphylococcus saprophyticus subsp. saprophyticus (strain ATCC 15305 / DSM 20229 / NCIMB 8711 / NCTC 7292 / S-41).